A 438-amino-acid polypeptide reads, in one-letter code: MAAFSGCASPLSTTLRSGLAPFTLRHRLRLRRLRASAATLREVCAGRVPEHVLQRAEEVGYVVPTEVQEQSLPVLLSGQDCILHAQTGSGKTLAYLLSVFSAIDFGRSSVQALVVVPTRELGMQVTKVARILAAKACTVMALLDGGMLRRQKSWVKAEPPAIIVATVASLCQMIEKRAFSLQSMRVLVIDEVDFIFGSSKQVSSLRKILTSYSAASSRQTIFASASIPQHNRFVHDCVQHKWTKTDVVHVHVNPVQPMPSHLQHKYAICSKKERLHVLLSLLEKDAPKSGIIFVAEQSEKSKKAGHPPSTTVVVEFLRTTYMGSLEVLLLEEDMNFNARATSFTEVKGKGFLLVSTDIASRGFDLPQTSHIYNFDLPKTAIDYLHRAGRTGREPFSKLACSVTTLITEDEHFVLQRFQNELKFHCEELPVESMFAFNL.

The N-terminal 44 residues, methionine 1 to cysteine 44, are a transit peptide targeting the chloroplast. Positions arginine 41–glutamate 69 match the Q motif motif. Positions leucine 72 to threonine 245 constitute a Helicase ATP-binding domain. Alanine 85–threonine 92 is an ATP binding site. A DEAD box motif is present at residues aspartate 190–aspartate 193. In terms of domain architecture, Helicase C-terminal spans arginine 274 to phenylalanine 436.

This sequence belongs to the DEAD box helicase family.

The protein localises to the plastid. It localises to the chloroplast. The enzyme catalyses ATP + H2O = ADP + phosphate + H(+). The protein is DEAD-box ATP-dependent RNA helicase 58, chloroplastic of Oryza sativa subsp. japonica (Rice).